The primary structure comprises 625 residues: Tumor necrosis factor receptor superfamily member 11A (625 aa).

An N-terminal signal peptide occupies residues 1–30 (MAPRARRRRQLPAPLLALCVLLVPLQVTLQ). Residues 31 to 214 (VTPPCTQERH…PKEAQAYLPS (184 aa)) are Extracellular-facing. 9 disulfide bridges follow: Cys-35/Cys-47, Cys-48/Cys-61, Cys-51/Cys-69, Cys-72/Cys-87, Cys-93/Cys-113, Cys-115/Cys-128, Cys-125/Cys-127, Cys-134/Cys-152, and Cys-155/Cys-170. 4 TNFR-Cys repeats span residues 35–69 (CTQE…DSVC), 72–113 (CGPD…PRRC), 115–152 (CTAG…DTVC), and 155–195 (CLLG…DVVC). An N-linked (GlcNAc...) asparagine glycan is attached at Asn-106. Na(+) contacts are provided by Cys-134, Ala-135, Phe-138, Ser-161, and Val-163. N-linked (GlcNAc...) asparagine glycosylation is present at Asn-175. A disulfide bond links Cys-176 and Cys-195. Residues 215-234 (LIVLLLFISVVVVAAIIFGV) traverse the membrane as a helical segment. Residues 235 to 625 (YYRKGGKALT…HTQGSGQCAE (391 aa)) are Cytoplasmic-facing. Disordered stretches follow at residues 331-356 (TQGD…STGS), 388-413 (GTES…MPVS), and 479-524 (SMAE…FISS). Positions 499 to 511 (SGSSPSDQPPASG) are enriched in low complexity. The span at 512–524 (NVTGNSNSTFISS) shows a compositional bias: polar residues. The required for interaction with EEIG1 and osteoclast differentiation stretch occupies residues 532 to 537 (GDIIVV). The tract at residues 542 to 625 (TSQEGPGSAE…HTQGSGQCAE (84 aa)) is disordered. Over residues 543–558 (SQEGPGSAEPESEPVG) the composition is skewed to low complexity. Residues 561–571 (VQEETLAHRDS) show a composition bias toward basic and acidic residues. Ser-571 is modified (phosphoserine). Over residues 603 to 625 (RPVQEQGGAQTSLHTQGSGQCAE) the composition is skewed to polar residues.

Binds to the clefts between the subunits of the TNFSF11 ligand trimer to form a heterohexamer. Part of a complex composed of EEIG1, TNFRSF11A/RANK, PLCG2, GAB2, TEC and BTK; complex formation increases in the presence of TNFSF11/RANKL. Interacts with TRAF1, TRAF2, TRAF3, TRAF5 and TRAF6. Interacts (via cytoplasmic domain) with GAB2. Interacts (via cytoplasmic domain); with EEIG1 (via N-terminus); when in the presence of TNFSF11/RANKL. As to expression, ubiquitous expression with high levels in trabecular bone, thymus, small intestine, lung, brain and kidney. Weakly expressed in spleen and bone marrow.

The protein resides in the cell membrane. It localises to the membrane raft. Functionally, receptor for TNFSF11/RANKL/TRANCE/OPGL; essential for RANKL-mediated osteoclastogenesis. Its interaction with EEIG1 promotes osteoclastogenesis via facilitating the transcription of NFATC1 and activation of PLCG2. Involved in the regulation of interactions between T-cells and dendritic cells. The chain is Tumor necrosis factor receptor superfamily member 11A (Tnfrsf11a) from Mus musculus (Mouse).